The primary structure comprises 362 residues: Fructose-bisphosphate aldolase (362 aa).

Serine 63 is a D-glyceraldehyde 3-phosphate binding site. Residue aspartate 112 is the Proton donor of the active site. Positions 113, 147, 177, and 229 each coordinate Zn(2+). Glycine 230 contributes to the dihydroxyacetone phosphate binding site. Histidine 268 provides a ligand contact to Zn(2+). Residues 269–271 (GGS) and 290–293 (NVDT) contribute to the dihydroxyacetone phosphate site.

The protein belongs to the class II fructose-bisphosphate aldolase family. In terms of assembly, homodimer. Requires Zn(2+) as cofactor.

The enzyme catalyses beta-D-fructose 1,6-bisphosphate = D-glyceraldehyde 3-phosphate + dihydroxyacetone phosphate. It participates in carbohydrate degradation; glycolysis; D-glyceraldehyde 3-phosphate and glycerone phosphate from D-glucose: step 4/4. Functionally, catalyzes the aldol condensation of dihydroxyacetone phosphate (DHAP or glycerone-phosphate) with glyceraldehyde 3-phosphate (G3P) to form fructose 1,6-bisphosphate (FBP) in gluconeogenesis and the reverse reaction in glycolysis. The protein is Fructose-bisphosphate aldolase (fba) of Neurospora crassa (strain ATCC 24698 / 74-OR23-1A / CBS 708.71 / DSM 1257 / FGSC 987).